The sequence spans 162 residues: UPF0114 protein SO_3997 (162 aa).

The next 3 membrane-spanning stretches (helical) occupy residues 10-32, 53-75, and 136-156; these read YASRWIMAPIYLGLSLVLLGLGI, LVLVTLSLIDITLVGGLIVMVMF, and IMWYLLIHITFVLSAFAMGYL.

The protein belongs to the UPF0114 family.

It is found in the cell membrane. The protein is UPF0114 protein SO_3997 of Shewanella oneidensis (strain ATCC 700550 / JCM 31522 / CIP 106686 / LMG 19005 / NCIMB 14063 / MR-1).